Here is a 412-residue protein sequence, read N- to C-terminus: Phosphatidylinositol 3,4,5-trisphosphate 3-phosphatase and protein-tyrosine-phosphatase PTEN1 (412 aa).

The region spanning 42–211 (RRLIIGGYDL…KYWSDLLSFS (170 aa)) is the Phosphatase tensin-type domain. The active-site Phosphocysteine intermediate is C152. The region spanning 239 to 396 (VDSVFFVVSE…FSLELLFGPA (158 aa)) is the C2 tensin-type domain.

The protein belongs to the PTEN phosphatase protein family. As to expression, expressed exclusively in pollen grains during the late stage of development (at protein level).

The enzyme catalyses O-phospho-L-tyrosyl-[protein] + H2O = L-tyrosyl-[protein] + phosphate. The catalysed reaction is a 1,2-diacyl-sn-glycero-3-phospho-(1D-myo-inositol-3,4,5-trisphosphate) + H2O = a 1,2-diacyl-sn-glycero-3-phospho-(1D-myo-inositol-4,5-bisphosphate) + phosphate. Inhibited by vanadate. In terms of biological role, protein tyrosine phosphatase that also exhibits lipid phosphatase activity. Can use phosphatidylinositol substrates such as PtdIns(3,4,5)P(3) as substrate. Pollen-specific phosphatase required for pollen development. This chain is Phosphatidylinositol 3,4,5-trisphosphate 3-phosphatase and protein-tyrosine-phosphatase PTEN1, found in Arabidopsis thaliana (Mouse-ear cress).